The following is a 112-amino-acid chain: Small ribosomal subunit protein eS24 (112 aa).

Residues R88–S112 form a disordered region.

The protein belongs to the eukaryotic ribosomal protein eS24 family.

This is Small ribosomal subunit protein eS24 from Methanospirillum hungatei JF-1 (strain ATCC 27890 / DSM 864 / NBRC 100397 / JF-1).